Reading from the N-terminus, the 180-residue chain is Protein YOP1 (180 aa).

Over 1–35 the chain is Cytoplasmic; the sequence is MADYLKLFQDSLKGLDTKFAGNQILSRIEAQTKLP. A helical membrane pass occupies residues 36–55; the sequence is RSYVIVGLVAVYFLLIFINV. Over 56–57 the chain is Lumenal; the sequence is GG. The helical transmembrane segment at 58–78 threads the bilayer; sequence IGEILSNFVGFCIPTYYSLKA. Residues 79 to 88 lie on the Cytoplasmic side of the membrane; that stretch reads LKTATSTDDT. A helical transmembrane segment spans residues 89–105; that stretch reads QLLTYWIVFSFLSVIEF. Residues 106–108 are Lumenal-facing; the sequence is WSK. The chain crosses the membrane as a helical span at residues 109–127; that stretch reads AILYWVPFYWFFKTVFLLY. The Cytoplasmic portion of the chain corresponds to 128–180; sequence IAIPSFGGAQLVYTRLISPFSDKYLPIVEGKSGELAQKVEAAANNAKASGYSR.

This sequence belongs to the DP1 family. In terms of assembly, oligomer.

It is found in the endoplasmic reticulum membrane. Its subcellular location is the golgi apparatus membrane. Its function is as follows. Required to generate and maintain the structure of the tubular endoplasmic reticulum network and the vacuole. Induces high curvature in membranes and causes membrane tubule formation. Involved in membrane/vesicle trafficking. The chain is Protein YOP1 (YOP1) from Kluyveromyces lactis (strain ATCC 8585 / CBS 2359 / DSM 70799 / NBRC 1267 / NRRL Y-1140 / WM37) (Yeast).